The following is a 413-amino-acid chain: Na(+)/H(+) antiporter NhaA (413 aa).

The next 11 membrane-spanning stretches (helical) occupy residues 15–35 (LESG…ALFV), 57–77 (LLHW…GLEI), 93–113 (ALPC…YASL), 123–143 (GWAI…SLLG), 152–172 (IFLA…IAVF), 175–195 (AELN…LLGF), 211–231 (VALW…GVVL), 261–281 (WVAF…SFAG), 295–315 (VALG…WLAI), 333–353 (GVSL…LLAF), and 364–384 (VGVL…LSLT).

The protein belongs to the NhaA Na(+)/H(+) (TC 2.A.33) antiporter family.

The protein localises to the cell inner membrane. It catalyses the reaction Na(+)(in) + 2 H(+)(out) = Na(+)(out) + 2 H(+)(in). Na(+)/H(+) antiporter that extrudes sodium in exchange for external protons. This Caulobacter vibrioides (strain ATCC 19089 / CIP 103742 / CB 15) (Caulobacter crescentus) protein is Na(+)/H(+) antiporter NhaA.